The sequence spans 246 residues: Flagellar brake protein YcgR (246 aa).

The region spanning 128 to 232 (KRAHFRAYVG…QAERQLLQAI (105 aa)) is the PilZ domain.

Belongs to the YcgR family. As to quaternary structure, monomer. Interacts with the flagellar basal bodies.

The protein localises to the bacterial flagellum basal body. Functionally, acts as a flagellar brake, regulating swimming and swarming in a bis-(3'-5') cyclic diguanylic acid (c-di-GMP)-dependent manner. Binds 1 c-di-GMP dimer per subunit. Increasing levels of c-di-GMP lead to decreased motility. The polypeptide is Flagellar brake protein YcgR (Thioalkalivibrio sulfidiphilus (strain HL-EbGR7)).